The sequence spans 331 residues: HPr kinase/phosphorylase (331 aa).

Catalysis depends on residues His-153 and Lys-174. 168–175 (GKSGLGKS) contributes to the ATP binding site. Mg(2+) is bound at residue Ser-175. Residue Asp-192 is the Proton acceptor; for phosphorylation activity. Proton donor; for dephosphorylation activity of the active site. The important for the catalytic mechanism of both phosphorylation and dephosphorylation stretch occupies residues 217–226 (MEIRGLGVVD). Glu-218 contributes to the Mg(2+) binding site. The active site involves Arg-259. The interval 280–285 (PIFPGK) is important for the catalytic mechanism of dephosphorylation.

This sequence belongs to the HPrK/P family. Homohexamer. It depends on Mg(2+) as a cofactor.

The enzyme catalyses [HPr protein]-L-serine + ATP = [HPr protein]-O-phospho-L-serine + ADP + H(+). It carries out the reaction [HPr protein]-O-phospho-L-serine + phosphate + H(+) = [HPr protein]-L-serine + diphosphate. Functionally, catalyzes the ATP- as well as the pyrophosphate-dependent phosphorylation of a specific serine residue in HPr, a phosphocarrier protein of the phosphoenolpyruvate-dependent sugar phosphotransferase system (PTS). HprK/P also catalyzes the pyrophosphate-producing, inorganic phosphate-dependent dephosphorylation (phosphorolysis) of seryl-phosphorylated HPr (P-Ser-HPr). This chain is HPr kinase/phosphorylase, found in Pelodictyon phaeoclathratiforme (strain DSM 5477 / BU-1).